A 571-amino-acid polypeptide reads, in one-letter code: Cilia- and flagella-associated protein 52 (571 aa).

WD repeat units follow at residues 62-106, 109-150, 156-195, 288-327, 330-364, 366-405, 410-449, 451-490, 494-533, and 536-571; these read GHGN…LLAR, LHKG…AICG, LNVGNATNVIFSRCRDEMFVTAGNGTIRVWELDLPNRKIW, QSQGGITSITLRGEGHQFFVGTEESHIYRVSFTDFKETLI, CHFEAVEDIVFPFGTAELFATCAKKDIRVWHTSSN, AHRIGVTAIATTSDCKRVISGGGEGEVRVWQIGCQTQKLE, EHKSSVSCIRVKKNNEECVTASTDGTCIIWDLVRLRRNQM, LANTLFQCVCYHPEEFQIITSGTDRKIAYWEVFDGTVIRE, SLSGSINGMDITQEGVHFVTGGNDHLVKVWDYNEGEVTHV, and GHSGNITRIRISPGNQYIVSVSADGAILRWKYPYTS.

It belongs to the CFAP52 family. As to quaternary structure, microtubule inner protein component of sperm flagellar doublet microtubules. Interacts with BRCA2. Interacts with the CCT chaperonin complex. Interacts with HSP70. Interacts with AK8. Interacts with CFAP45. Interacts with DNAI1. Interacts with IQDC.

Its subcellular location is the cytoplasm. It is found in the cytoskeleton. The protein resides in the cilium axoneme. The protein localises to the flagellum axoneme. Microtubule inner protein (MIP) part of the dynein-decorated doublet microtubules (DMTs) in cilia axoneme. Important for proper ciliary and flagellar beating. May act in cooperation with CFAP45 and axonemal dynein subunit DNAH11. May play a role in cell growth and/or survival. This is Cilia- and flagella-associated protein 52 from Macaca fascicularis (Crab-eating macaque).